Reading from the N-terminus, the 569-residue chain is MRYSRLFGKTQREIPSDAETISHQLLLRSGMIAQLTAGVYSFMPLAWRSIQKIENIIRQEMNKSGCQELAMPVLQPVEIWQQSGREAPFGQTLFHLKDRKDRNLVLGPTHEEVITDLASRYIQSYRDLPQRLYQIQTKFRDEPRPRGGLIRVREFIMKDMYSFDASPEGLDESYQTMKQAYENVYRRCGLESMVIDADSGAIGGKASHEFMIVAESGEDSIIYCPKCNYAANAEKAVFKKKTLPKEPPKDLEEVATPGQKTISEVAAFLSLKPENTLKAVFYMADGKFVMAVIRGDLDINEIKLKNLLKCNDLRLAEDSEVKAAGIAAGFASPVGLKNSLTVADDSVENGSNFVAGANKDGFHLKNVNFGRDFKADKMADIALAAEGAACPFCDGTFASKRGVEVGHIFKLGTFLSERFGANFTDAEGISHPIIMGCYGMGVGRLLAAAIEQNHDEKGIIWPMPIAPYQIYICGLFLDNPAVSQAAEKIYTELEAQGVEVLFDDRELTAGVKFNDADLLGIPLRLTISPRNLDKGGVELKLRRNKESELVPLESIMERVITCIKSQSDL.

It belongs to the class-II aminoacyl-tRNA synthetase family. ProS type 1 subfamily. In terms of assembly, homodimer.

It is found in the cytoplasm. It carries out the reaction tRNA(Pro) + L-proline + ATP = L-prolyl-tRNA(Pro) + AMP + diphosphate. Its function is as follows. Catalyzes the attachment of proline to tRNA(Pro) in a two-step reaction: proline is first activated by ATP to form Pro-AMP and then transferred to the acceptor end of tRNA(Pro). As ProRS can inadvertently accommodate and process non-cognate amino acids such as alanine and cysteine, to avoid such errors it has two additional distinct editing activities against alanine. One activity is designated as 'pretransfer' editing and involves the tRNA(Pro)-independent hydrolysis of activated Ala-AMP. The other activity is designated 'posttransfer' editing and involves deacylation of mischarged Ala-tRNA(Pro). The misacylated Cys-tRNA(Pro) is not edited by ProRS. The protein is Proline--tRNA ligase of Dehalococcoides mccartyi (strain ATCC BAA-2266 / KCTC 15142 / 195) (Dehalococcoides ethenogenes (strain 195)).